A 571-amino-acid chain; its full sequence is Proline--tRNA ligase (571 aa).

Belongs to the class-II aminoacyl-tRNA synthetase family. ProS type 1 subfamily. In terms of assembly, homodimer.

Its subcellular location is the cytoplasm. It carries out the reaction tRNA(Pro) + L-proline + ATP = L-prolyl-tRNA(Pro) + AMP + diphosphate. Catalyzes the attachment of proline to tRNA(Pro) in a two-step reaction: proline is first activated by ATP to form Pro-AMP and then transferred to the acceptor end of tRNA(Pro). As ProRS can inadvertently accommodate and process non-cognate amino acids such as alanine and cysteine, to avoid such errors it has two additional distinct editing activities against alanine. One activity is designated as 'pretransfer' editing and involves the tRNA(Pro)-independent hydrolysis of activated Ala-AMP. The other activity is designated 'posttransfer' editing and involves deacylation of mischarged Ala-tRNA(Pro). The misacylated Cys-tRNA(Pro) is not edited by ProRS. The polypeptide is Proline--tRNA ligase (Psychromonas ingrahamii (strain DSM 17664 / CCUG 51855 / 37)).